Here is a 621-residue protein sequence, read N- to C-terminus: Probable potassium transport system protein Kup 2 (621 aa).

A run of 12 helical transmembrane segments spans residues 9–29, 48–68, 101–121, 136–156, 164–184, 210–230, 246–266, 275–295, 336–356, 364–384, 393–413, and 418–438; these read MAGL…TSPL, IFGI…VKYV, IVLL…ITPA, SGME…LFLL, VGLM…ILGL, GFHA…AEAL, WFSL…ALLM, PFFL…ATLA, IYMP…VLTF, AAYG…FFVV, LPLA…FFAA, and VADG…LMST.

Belongs to the HAK/KUP transporter (TC 2.A.72) family.

It localises to the cell inner membrane. It catalyses the reaction K(+)(in) + H(+)(in) = K(+)(out) + H(+)(out). Transport of potassium into the cell. Likely operates as a K(+):H(+) symporter. The polypeptide is Probable potassium transport system protein Kup 2 (Chromobacterium violaceum (strain ATCC 12472 / DSM 30191 / JCM 1249 / CCUG 213 / NBRC 12614 / NCIMB 9131 / NCTC 9757 / MK)).